A 412-amino-acid chain; its full sequence is Peptidase T (412 aa).

His84 contacts Zn(2+). Asp86 is a catalytic residue. Position 146 (Asp146) interacts with Zn(2+). The Proton acceptor role is filled by Glu179. 3 residues coordinate Zn(2+): Glu180, Asp202, and His385.

Belongs to the peptidase M20B family. Requires Zn(2+) as cofactor.

It localises to the cytoplasm. The catalysed reaction is Release of the N-terminal residue from a tripeptide.. Functionally, cleaves the N-terminal amino acid of tripeptides. This chain is Peptidase T, found in Haemophilus influenzae (strain ATCC 51907 / DSM 11121 / KW20 / Rd).